A 361-amino-acid polypeptide reads, in one-letter code: Phospho-N-acetylmuramoyl-pentapeptide-transferase (361 aa).

Transmembrane regions (helical) follow at residues 28 to 48 (LAALTALSISFLIGPAMIRSL), 73 to 93 (TMGGALILMAVIITTLLWADL), 97 to 117 (YIWLVLLTTLGFGAIGWVDDY), 134 to 154 (FFWQSIIALLVAVYLAMTAEL), 168 to 188 (VAIPLGSFLFIILTYLVIVGS), 200 to 220 (GLAIMPTVMISGALAIFAYVA), 237 to 257 (AGELAVFCGALAGAGLAFLWF), 264 to 284 (VFMGDVGALALGAALGVITVI), 289 to 309 (IVLVIMGGVFVMEALSVMIQV), and 338 to 358 (QVVVRFWIITIILVLIGLSTL).

It belongs to the glycosyltransferase 4 family. MraY subfamily. Mg(2+) serves as cofactor.

The protein resides in the cell inner membrane. The catalysed reaction is UDP-N-acetyl-alpha-D-muramoyl-L-alanyl-gamma-D-glutamyl-meso-2,6-diaminopimeloyl-D-alanyl-D-alanine + di-trans,octa-cis-undecaprenyl phosphate = di-trans,octa-cis-undecaprenyl diphospho-N-acetyl-alpha-D-muramoyl-L-alanyl-D-glutamyl-meso-2,6-diaminopimeloyl-D-alanyl-D-alanine + UMP. The protein operates within cell wall biogenesis; peptidoglycan biosynthesis. Its function is as follows. Catalyzes the initial step of the lipid cycle reactions in the biosynthesis of the cell wall peptidoglycan: transfers peptidoglycan precursor phospho-MurNAc-pentapeptide from UDP-MurNAc-pentapeptide onto the lipid carrier undecaprenyl phosphate, yielding undecaprenyl-pyrophosphoryl-MurNAc-pentapeptide, known as lipid I. In Nitrosomonas eutropha (strain DSM 101675 / C91 / Nm57), this protein is Phospho-N-acetylmuramoyl-pentapeptide-transferase.